Reading from the N-terminus, the 435-residue chain is MTWRVAVLLSLVLGAGAVPVGVDDPEDGGKHWVVIVAGSNGWYNYRHQADACHAYQIIHRNGIPDEQIIVMMYDDIANSEENPTPGVVINRPNGTDVYKGVLKDYTGEDVTPENFLAVLRGDAEAVKGKGSGKVLKSGPRDHVFIYFTDHGATGILVFPNDDLHVKDLNKTIRYMYEHKMYQKMVFYIEACESGSMMNHLPDDINVYATTAANPKESSYACYYDEERGTYLGDWYSVNWMEDSDVEDLTKETLHKQYHLVKSHTNTSHVMQYGNKSISTMKVMQFQGMKHRASSPISLPPVTHLDLTPSPDVPLTILKRKLLRTNDVKESQNLIGQIQQFLDARHVIEKSVHKIVSLLAGFGETAERHLSERTMLTAHDCYQEAVTHFRTHCFNWHSVTYEHALRYLYVLANLCEAPYPIDRIEMAMDKVCLSHY.

A signal peptide spans 1-17 (MTWRVAVLLSLVLGAGA). The N-linked (GlcNAc...) asparagine glycan is linked to N93. H150 is a catalytic residue. An N-linked (GlcNAc...) asparagine glycan is attached at N169. Catalysis depends on C191, which acts as the Nucleophile. N265 and N274 each carry an N-linked (GlcNAc...) asparagine glycan. Residues 326 to 435 (DVKESQNLIG…AMDKVCLSHY (110 aa)) constitute a propeptide that is removed on maturation. Disulfide bonds link C380–C414 and C392–C431.

It belongs to the peptidase C13 family. In terms of assembly, homodimer before autocatalytic removal of the propeptide. Monomer after autocatalytic processing. May interact with integrins. Glycosylated. In terms of processing, activated by autocatalytic processing at pH 4. As to expression, detected in kidney proximal tubules (at protein level). Ubiquitous. Particularly abundant in kidney and placenta.

It is found in the lysosome. The catalysed reaction is Hydrolysis of proteins and small molecule substrates at -Asn-|-Xaa- bonds.. Its activity is regulated as follows. Inhibited by cystatin-C. Has a strict specificity for hydrolysis of asparaginyl bonds. Can also cleave aspartyl bonds slowly, especially under acidic conditions. Involved in the processing of proteins for MHC class II antigen presentation in the lysosomal/endosomal system. Also involved in MHC class I antigen presentation in cross-presenting dendritic cells by mediating cleavage and maturation of Perforin-2 (MPEG1), thereby promoting antigen translocation in the cytosol. Required for normal lysosomal protein degradation in renal proximal tubules. Required for normal degradation of internalized EGFR. Plays a role in the regulation of cell proliferation via its role in EGFR degradation. This is Legumain (Lgmn) from Mus musculus (Mouse).